A 264-amino-acid chain; its full sequence is Glucosamine-6-phosphate deaminase (264 aa).

Residue Asp67 is the Proton acceptor; for enolization step of the active site. Asn136 (for ring-opening step) is an active-site residue. The active-site Proton acceptor; for ring-opening step is His138. Glu143 serves as the catalytic For ring-opening step.

Belongs to the glucosamine/galactosamine-6-phosphate isomerase family. NagB subfamily. As to quaternary structure, homohexamer.

The enzyme catalyses alpha-D-glucosamine 6-phosphate + H2O = beta-D-fructose 6-phosphate + NH4(+). It participates in amino-sugar metabolism; N-acetylneuraminate degradation; D-fructose 6-phosphate from N-acetylneuraminate: step 5/5. In terms of biological role, catalyzes the reversible isomerization-deamination of glucosamine 6-phosphate (GlcN6P) to form fructose 6-phosphate (Fru6P) and ammonium ion. This Shewanella woodyi (strain ATCC 51908 / MS32) protein is Glucosamine-6-phosphate deaminase.